Reading from the N-terminus, the 288-residue chain is Quinate/shikimate dehydrogenase (288 aa).

Residues Lys-71 and Asp-107 each coordinate substrate. Residues 132–135 (AGGA), 155–158 (NRRD), Lys-205, 232–235 (CVYN), and Gly-255 contribute to the NAD(+) site.

This sequence belongs to the shikimate dehydrogenase family. Homodimer.

The catalysed reaction is L-quinate + NAD(+) = 3-dehydroquinate + NADH + H(+). It catalyses the reaction L-quinate + NADP(+) = 3-dehydroquinate + NADPH + H(+). The enzyme catalyses shikimate + NADP(+) = 3-dehydroshikimate + NADPH + H(+). It carries out the reaction shikimate + NAD(+) = 3-dehydroshikimate + NADH + H(+). It participates in metabolic intermediate biosynthesis; chorismate biosynthesis; chorismate from D-erythrose 4-phosphate and phosphoenolpyruvate: step 4/7. In terms of biological role, the actual biological function of YdiB remains unclear, nor is it known whether 3-dehydroshikimate or quinate represents the natural substrate. Catalyzes the reversible NAD-dependent reduction of both 3-dehydroshikimate (DHSA) and 3-dehydroquinate to yield shikimate (SA) and quinate, respectively. It can use both NAD or NADP for catalysis, however it has higher catalytic efficiency with NAD. The polypeptide is Quinate/shikimate dehydrogenase (Escherichia coli O81 (strain ED1a)).